Here is an 82-residue protein sequence, read N- to C-terminus: Delta-actitoxin-Aeq2c (82 aa).

The N-terminal stretch at 1 to 19 (MNRLMILVFAAVFLALASA) is a signal peptide. A propeptide spanning residues 20–26 (DEDVDIA) is cleaved from the precursor. 3 disulfide bridges follow: Cys32–Cys79, Cys34–Cys69, and Cys62–Cys80.

The protein belongs to the sea anemone sodium channel inhibitory toxin family. Type I subfamily.

It is found in the secreted. The protein localises to the nematocyst. Functionally, binds specifically to voltage-gated sodium channels (Nav), thereby delaying their inactivation during signal transduction. Causes death to crabs. This chain is Delta-actitoxin-Aeq2c, found in Actinia equina (Beadlet anemone).